Reading from the N-terminus, the 130-residue chain is Protein UL145 (130 aa).

In terms of assembly, interacts with host DDB1; this interaction promotes STAT2 degradation.

In terms of biological role, plays a role in the inhibition of host innate immunity by exploiting host DDB1-cullin RING ubiquitin ligases (CRLs). Mechanistically, recruits host DDB1 via a DCAF-like interaction motif to antagonize IFN signaling by STAT2 degradation. This chain is Protein UL145 (UL145), found in Homo sapiens (Human).